A 624-amino-acid polypeptide reads, in one-letter code: Chaperone protein HtpG (624 aa).

Positions 1–336 (MKGQETRGFQ…SSDLPLNVSR (336 aa)) are a; substrate-binding. The b stretch occupies residues 337-552 (EILQDSTVTR…ADEMSTQMAK (216 aa)). The tract at residues 553-624 (LFAAAGQKVP…IRRMNQLLVS (72 aa)) is c.

It belongs to the heat shock protein 90 family. In terms of assembly, homodimer.

Its subcellular location is the cytoplasm. Functionally, molecular chaperone. Has ATPase activity. This chain is Chaperone protein HtpG, found in Shigella boydii serotype 4 (strain Sb227).